The sequence spans 50 residues: MTDSIDKSGRGVNECKRCGRKQGLVRKYDIYLCRHCFREIAHEMGFEKYS.

Positions 15, 18, 33, and 36 each coordinate Zn(2+).

This sequence belongs to the universal ribosomal protein uS14 family. Zinc-binding uS14 subfamily. In terms of assembly, part of the 30S ribosomal subunit. Requires Zn(2+) as cofactor.

In terms of biological role, binds 16S rRNA, required for the assembly of 30S particles. The polypeptide is Small ribosomal subunit protein uS14 (Methanosarcina mazei (strain ATCC BAA-159 / DSM 3647 / Goe1 / Go1 / JCM 11833 / OCM 88) (Methanosarcina frisia)).